The following is a 177-amino-acid chain: UPF0114 protein jhp_0175 (177 aa).

Helical transmembrane passes span 15–35, 54–74, and 145–165; these read WLLA…GYVF, LVLS…VLMV, and PIFW…LTAV.

This sequence belongs to the UPF0114 family.

The protein resides in the cell membrane. This is UPF0114 protein jhp_0175 from Helicobacter pylori (strain J99 / ATCC 700824) (Campylobacter pylori J99).